The sequence spans 282 residues: E3 ubiquitin-protein ligase SIAH1 (282 aa).

Residues methionine 1–proline 17 are compositionally biased toward polar residues. Positions methionine 1–valine 22 are disordered. At serine 19 the chain carries Phosphoserine; by ATM and ATR. Residues cysteine 41–arginine 76 form an RING-type zinc finger. The SBD stretch occupies residues valine 90–cysteine 282. Residues serine 93–lysine 153 form an SIAH-type zinc finger. Positions 98, 105, 117, 121, 128, 135, 147, and 152 each coordinate Zn(2+).

This sequence belongs to the SINA (Seven in absentia) family. Homodimer. Interacts with group 1 glutamate receptors GRM1 and GRM5. Interacts with DAB1, which may inhibit its activity. Interacts with UBE2E2. Interacts with PEG3. Interacts with GAPDH; leading to stabilize SIAH1. Component of some large E3 complex composed of UBE2D1, SIAH1, CACYBP/SIP, SKP1, APC and TBL1X. Interacts with UBE2I. Interacts with alpha-tubulin. Interacts with PEG10, which may inhibit its activity. Interacts with KHDRBS3. Interacts with SNCAIP. Interacts with HIPK2; the interaction is promoted by DAZAP2 and results in SIAH1-mediated ubiquitination and subsequent proteasomal degradation of HIPK2. Interacts with DAZAP2; the interaction is decreased following phosphorylation of DAZAP2 by HIPK2. Interacts with Bassoon/BSN and Piccolo/PLCO; these interactions negatively regulate SIAH1 E3 ligase activity. Interacts with DCC. Interacts with AXIN1; catalyzes AXIN1 ubiquitination and subsequent proteasome-mediated ubiquitin-dependent degradation. In terms of processing, phosphorylated on Ser-19 by ATM and ATR. This phosphorylation disrupts SIAH1 interaction with HIPK2, and subsequent proteasomal degradation of HIPK2. In terms of tissue distribution, widely expressed at a low level. Down-regulated in advanced hepatocellular carcinomas.

It is found in the cytoplasm. Its subcellular location is the nucleus. It catalyses the reaction S-ubiquitinyl-[E2 ubiquitin-conjugating enzyme]-L-cysteine + [acceptor protein]-L-lysine = [E2 ubiquitin-conjugating enzyme]-L-cysteine + N(6)-ubiquitinyl-[acceptor protein]-L-lysine.. The protein operates within protein modification; protein ubiquitination. With respect to regulation, inhibited by interaction with SNCAIP (isoform 2, but not isoform 1). May be inhibited by interaction with PEG10. In terms of biological role, E3 ubiquitin-protein ligase that mediates ubiquitination and subsequent proteasomal degradation of target proteins. E3 ubiquitin ligases accept ubiquitin from an E2 ubiquitin-conjugating enzyme in the form of a thioester and then directly transfers the ubiquitin to targeted substrates. Mediates E3 ubiquitin ligase activity either through direct binding to substrates or by functioning as the essential RING domain subunit of larger E3 complexes. Triggers the ubiquitin-mediated degradation of many substrates, including proteins involved in transcription regulation (ELL2, MYB, POU2AF1, PML and RBBP8), a cell surface receptor (DCC), the cell-surface receptor-type tyrosine kinase FLT3, the cytoplasmic signal transduction molecules (KLF10/TIEG1 and NUMB), an antiapoptotic protein (BAG1), a microtubule motor protein (KIF22), a protein involved in synaptic vesicle function in neurons (SYP), a structural protein (CTNNB1) and SNCAIP. Confers constitutive instability to HIPK2 through proteasomal degradation. It is thereby involved in many cellular processes such as apoptosis, tumor suppression, cell cycle, axon guidance, transcription regulation, spermatogenesis and TNF-alpha signaling. Has some overlapping function with SIAH2. Induces apoptosis in cooperation with PEG3. Upon nitric oxid (NO) generation that follows apoptotic stimulation, interacts with S-nitrosylated GAPDH, mediating the translocation of GAPDH to the nucleus. GAPDH acts as a stabilizer of SIAH1, facilitating the degradation of nuclear proteins. Mediates ubiquitination and degradation of EGLN2 and EGLN3 in response to the unfolded protein response (UPR), leading to their degradation and subsequent stabilization of ATF4. Also part of the Wnt signaling pathway in which it mediates the Wnt-induced ubiquitin-mediated proteasomal degradation of AXIN1. This is E3 ubiquitin-protein ligase SIAH1 (SIAH1) from Homo sapiens (Human).